Consider the following 1207-residue polypeptide: DNA-directed RNA polymerase subunit beta' (1207 aa).

Zn(2+)-binding residues include cysteine 60, cysteine 62, cysteine 75, and cysteine 78. Residues aspartate 450, aspartate 452, and aspartate 454 each coordinate Mg(2+). Positions 819, 893, 900, and 903 each coordinate Zn(2+).

It belongs to the RNA polymerase beta' chain family. In terms of assembly, the RNAP catalytic core consists of 2 alpha, 1 beta, 1 beta' and 1 omega subunit. When a sigma factor is associated with the core the holoenzyme is formed, which can initiate transcription. Mg(2+) is required as a cofactor. Requires Zn(2+) as cofactor.

The enzyme catalyses RNA(n) + a ribonucleoside 5'-triphosphate = RNA(n+1) + diphosphate. In terms of biological role, DNA-dependent RNA polymerase catalyzes the transcription of DNA into RNA using the four ribonucleoside triphosphates as substrates. The protein is DNA-directed RNA polymerase subunit beta' of Streptococcus pyogenes serotype M12 (strain MGAS2096).